We begin with the raw amino-acid sequence, 318 residues long: 1-aminocyclopropane-1-carboxylate oxidase (318 aa).

In terms of domain architecture, Fe2OG dioxygenase spans 151-251 (PTFGTKVSNY…RMSIASFYNP (101 aa)). Histidine 175, aspartate 177, and histidine 232 together coordinate Fe cation.

The protein belongs to the iron/ascorbate-dependent oxidoreductase family. Fe cation is required as a cofactor.

It carries out the reaction 1-aminocyclopropane-1-carboxylate + L-ascorbate + O2 = ethene + L-dehydroascorbate + hydrogen cyanide + CO2 + 2 H2O. It functions in the pathway alkene biosynthesis; ethylene biosynthesis via S-adenosyl-L-methionine; ethylene from S-adenosyl-L-methionine: step 2/2. This Dendrobium crumenatum (Tropical pigeon orchid) protein is 1-aminocyclopropane-1-carboxylate oxidase (ACO).